Reading from the N-terminus, the 432-residue chain is Glutamyl-tRNA reductase (432 aa).

Residues 55-58 (TCNR), serine 114, 119-121 (ETQ), and glutamine 125 each bind substrate. The Nucleophile role is filled by cysteine 56. 194 to 199 (GAGEMI) is a binding site for NADP(+).

It belongs to the glutamyl-tRNA reductase family. As to quaternary structure, homodimer.

It carries out the reaction (S)-4-amino-5-oxopentanoate + tRNA(Glu) + NADP(+) = L-glutamyl-tRNA(Glu) + NADPH + H(+). It participates in porphyrin-containing compound metabolism; protoporphyrin-IX biosynthesis; 5-aminolevulinate from L-glutamyl-tRNA(Glu): step 1/2. In terms of biological role, catalyzes the NADPH-dependent reduction of glutamyl-tRNA(Glu) to glutamate 1-semialdehyde (GSA). This Burkholderia ambifaria (strain MC40-6) protein is Glutamyl-tRNA reductase.